Consider the following 396-residue polypeptide: N-acetylglucosamine-6-phosphate deacetylase (396 aa).

Fe cation-binding residues include H63, H65, and E136. Position 147–148 (147–148 (AQ)) interacts with substrate. Residues H202 and H223 each coordinate Fe cation. Residues 226 to 227 (NA), R234, and 255 to 258 (DGIH) contribute to the substrate site. A Fe cation-binding site is contributed by D281. The Proton donor role is filled by D281. 314–316 (LAG) contacts substrate.

Belongs to the metallo-dependent hydrolases superfamily. NagA family. As to quaternary structure, homodimer. It depends on a divalent metal cation as a cofactor.

It catalyses the reaction N-acetyl-D-glucosamine 6-phosphate + H2O = D-glucosamine 6-phosphate + acetate. Its pathway is amino-sugar metabolism; N-acetylneuraminate degradation; D-fructose 6-phosphate from N-acetylneuraminate: step 4/5. Involved in the first committed step in the biosynthesis of amino-sugar-nucleotides. Catalyzes the hydrolysis of the N-acetyl group of N-acetylglucosamine-6-phosphate (GlcNAc-6-P) to yield glucosamine 6-phosphate and acetate. Essential for growth on N-acetylglucosamine. The sequence is that of N-acetylglucosamine-6-phosphate deacetylase (nagA) from Bacillus subtilis (strain 168).